The primary structure comprises 228 residues: Cytochrome c oxidase subunit 2 (228 aa).

The Mitochondrial intermembrane portion of the chain corresponds to 1 to 26; the sequence is MSTWANLGLQDSASPLMEQLIFFHDH. The helical transmembrane segment at 27 to 48 threads the bilayer; that stretch reads ALLILVMITVLVGYLMFMLFFN. Residues 49–62 lie on the Mitochondrial matrix side of the membrane; that stretch reads NYVNRFLLHGQLIE. A helical transmembrane segment spans residues 63–82; the sequence is MIWTILPAIILLFIALPSLR. Residues 83–228 are Mitochondrial intermembrane-facing; the sequence is LLYLLDEINE…FIKWISSNNS (146 aa). Cu cation contacts are provided by His161, Cys196, Glu198, Cys200, His204, and Met207. Glu198 serves as a coordination point for Mg(2+).

The protein belongs to the cytochrome c oxidase subunit 2 family. Component of the cytochrome c oxidase (complex IV, CIV), a multisubunit enzyme composed of a catalytic core of 3 subunits and several supernumerary subunits. The complex exists as a monomer or a dimer and forms supercomplexes (SCs) in the inner mitochondrial membrane with ubiquinol-cytochrome c oxidoreductase (cytochrome b-c1 complex, complex III, CIII). Cu cation is required as a cofactor.

It is found in the mitochondrion inner membrane. The enzyme catalyses 4 Fe(II)-[cytochrome c] + O2 + 8 H(+)(in) = 4 Fe(III)-[cytochrome c] + 2 H2O + 4 H(+)(out). Functionally, component of the cytochrome c oxidase, the last enzyme in the mitochondrial electron transport chain which drives oxidative phosphorylation. The respiratory chain contains 3 multisubunit complexes succinate dehydrogenase (complex II, CII), ubiquinol-cytochrome c oxidoreductase (cytochrome b-c1 complex, complex III, CIII) and cytochrome c oxidase (complex IV, CIV), that cooperate to transfer electrons derived from NADH and succinate to molecular oxygen, creating an electrochemical gradient over the inner membrane that drives transmembrane transport and the ATP synthase. Cytochrome c oxidase is the component of the respiratory chain that catalyzes the reduction of oxygen to water. Electrons originating from reduced cytochrome c in the intermembrane space (IMS) are transferred via the dinuclear copper A center (CU(A)) of subunit 2 and heme A of subunit 1 to the active site in subunit 1, a binuclear center (BNC) formed by heme A3 and copper B (CU(B)). The BNC reduces molecular oxygen to 2 water molecules using 4 electrons from cytochrome c in the IMS and 4 protons from the mitochondrial matrix. The sequence is that of Cytochrome c oxidase subunit 2 (mt:CoII) from Drosophila melanogaster (Fruit fly).